Consider the following 152-residue polypeptide: 2-C-methyl-D-erythritol 2,4-cyclodiphosphate synthase (152 aa).

A divalent metal cation contacts are provided by Asp8 and His10. 4-CDP-2-C-methyl-D-erythritol 2-phosphate-binding positions include 8–10 (DSH) and 34–35 (HS). Residue His42 participates in a divalent metal cation binding. 4-CDP-2-C-methyl-D-erythritol 2-phosphate-binding positions include 56–58 (DIG) and 61–65 (FPDTD).

This sequence belongs to the IspF family. As to quaternary structure, homotrimer. A divalent metal cation is required as a cofactor.

It catalyses the reaction 4-CDP-2-C-methyl-D-erythritol 2-phosphate = 2-C-methyl-D-erythritol 2,4-cyclic diphosphate + CMP. Its pathway is isoprenoid biosynthesis; isopentenyl diphosphate biosynthesis via DXP pathway; isopentenyl diphosphate from 1-deoxy-D-xylulose 5-phosphate: step 4/6. Involved in the biosynthesis of isopentenyl diphosphate (IPP) and dimethylallyl diphosphate (DMAPP), two major building blocks of isoprenoid compounds. Catalyzes the conversion of 4-diphosphocytidyl-2-C-methyl-D-erythritol 2-phosphate (CDP-ME2P) to 2-C-methyl-D-erythritol 2,4-cyclodiphosphate (ME-CPP) with a corresponding release of cytidine 5-monophosphate (CMP). The protein is 2-C-methyl-D-erythritol 2,4-cyclodiphosphate synthase of Thermus thermophilus (strain ATCC BAA-163 / DSM 7039 / HB27).